The following is a 400-amino-acid chain: Enoyl-[acyl-carrier-protein] reductase [NADH] (400 aa).

Residues 48–53 (GSSSGY), 74–75 (FE), 111–112 (DA), and 139–140 (LA) contribute to the NAD(+) site. Substrate is bound at residue Tyr225. Tyr235 serves as the catalytic Proton donor. Residues Lys244 and 273–275 (VVT) each bind NAD(+).

This sequence belongs to the TER reductase family. As to quaternary structure, monomer.

It catalyses the reaction a 2,3-saturated acyl-[ACP] + NAD(+) = a (2E)-enoyl-[ACP] + NADH + H(+). The protein operates within lipid metabolism; fatty acid biosynthesis. In terms of biological role, involved in the final reduction of the elongation cycle of fatty acid synthesis (FAS II). Catalyzes the reduction of a carbon-carbon double bond in an enoyl moiety that is covalently linked to an acyl carrier protein (ACP). The polypeptide is Enoyl-[acyl-carrier-protein] reductase [NADH] (Aliivibrio fischeri (strain MJ11) (Vibrio fischeri)).